Here is a 646-residue protein sequence, read N- to C-terminus: Translation initiation factor IF-2 (646 aa).

The tr-type G domain maps to 146–315 (PRPPVVTVMG…LLVAEMEELR (170 aa)). The segment at 155 to 162 (GHVDHGKT) is G1. 155–162 (GHVDHGKT) is a binding site for GTP. Residues 180–184 (GITQH) form a G2 region. Positions 201 to 204 (DTPG) are G3. Residues 201-205 (DTPGH) and 255-258 (NKID) each bind GTP. Residues 255–258 (NKID) are G4. A G5 region spans residues 291–293 (SAK).

It belongs to the TRAFAC class translation factor GTPase superfamily. Classic translation factor GTPase family. IF-2 subfamily.

Its subcellular location is the cytoplasm. Functionally, one of the essential components for the initiation of protein synthesis. Protects formylmethionyl-tRNA from spontaneous hydrolysis and promotes its binding to the 30S ribosomal subunits. Also involved in the hydrolysis of GTP during the formation of the 70S ribosomal complex. The chain is Translation initiation factor IF-2 from Clostridioides difficile (strain 630) (Peptoclostridium difficile).